Here is a 615-residue protein sequence, read N- to C-terminus: UvrABC system protein C (615 aa).

The 78-residue stretch at 14 to 91 (TSPGCYIHKD…IKENKPKYNI (78 aa)) folds into the GIY-YIG domain. One can recognise a UVR domain in the interval 196–231 (NKIIDELKGKMAAAAQTMEFERAAEYRDLIQAIGTL).

The protein belongs to the UvrC family. In terms of assembly, interacts with UvrB in an incision complex.

It is found in the cytoplasm. In terms of biological role, the UvrABC repair system catalyzes the recognition and processing of DNA lesions. UvrC both incises the 5' and 3' sides of the lesion. The N-terminal half is responsible for the 3' incision and the C-terminal half is responsible for the 5' incision. The sequence is that of UvrABC system protein C from Streptococcus pneumoniae (strain JJA).